The following is a 164-amino-acid chain: PTS system sorbose-specific EIIB component (164 aa).

The region spanning 1-164 (MIITLARVDD…AKIDEVFGKE (164 aa)) is the PTS EIIB type-4 domain. His14 (pros-phosphohistidine intermediate) is an active-site residue. The residue at position 14 (His14) is a Phosphohistidine; by EIIA.

It is found in the cytoplasm. The enzyme catalyses keto-L-sorbose(out) + N(pros)-phospho-L-histidyl-[protein] = L-sorbose 1-phosphate(in) + L-histidyl-[protein]. The phosphoenolpyruvate-dependent sugar phosphotransferase system (PTS), a major carbohydrate active transport system, catalyzes the phosphorylation of incoming sugar substrates concomitant with their translocation across the cell membrane. The enzyme II SorABCD PTS system is involved in L-sorbose transport. This Lacticaseibacillus casei (Lactobacillus casei) protein is PTS system sorbose-specific EIIB component.